The chain runs to 163 residues: Putative pre-16S rRNA nuclease (163 aa).

It belongs to the YqgF nuclease family.

The protein localises to the cytoplasm. Could be a nuclease involved in processing of the 5'-end of pre-16S rRNA. The chain is Putative pre-16S rRNA nuclease from Chlamydia caviae (strain ATCC VR-813 / DSM 19441 / 03DC25 / GPIC) (Chlamydophila caviae).